Reading from the N-terminus, the 209-residue chain is Vacuolar protein sorting-associated protein 28 homolog 1 (209 aa).

One can recognise a VPS28 N-terminal domain in the interval 1-99; that stretch reads MEVKLWNDKR…TSGVPATVEH (99 aa). In terms of domain architecture, VPS28 C-terminal spans 109–205; the sequence is SSASVVAECV…SYNSFMAALP (97 aa).

It belongs to the VPS28 family. Component of the endosomal sorting required for transport complex I (ESCRT-I), composed of ELC, VPS28 and VPS37. Interacts with ELC.

It localises to the endosome. Its function is as follows. Component of the ESCRT-I complex (endosomal sorting complex required for transport I), a regulator of vesicular trafficking process. Required for the sorting of endocytic ubiquitinated cargos into multivesicular bodies (MVBs). Mediates the association to the ESCRT-0 complex. The polypeptide is Vacuolar protein sorting-associated protein 28 homolog 1 (VPS28-1) (Arabidopsis thaliana (Mouse-ear cress)).